The chain runs to 677 residues: Beta-galactosidase (677 aa).

The signal sequence occupies residues 1-23; the sequence is MPGFLVRILPLLLVLLLLGPTRG. Positions 24 to 28 are excised as a propeptide; that stretch reads LRNAT. N-linked (GlcNAc...) asparagine glycosylation is present at N26. The substrate site is built by Y83, E129, and N187. The Proton donor role is filled by E188. Cysteines 195 and 230 form a disulfide. N-linked (GlcNAc...) asparagine glycosylation occurs at N247. The active-site Nucleophile is the E268. Y333 serves as a coordination point for substrate. Residues N464, N498, N542, N545, and N555 are each glycosylated (N-linked (GlcNAc...) asparagine). The cysteines at positions 626 and 634 are disulfide-linked. The tract at residues 650-677 is disordered; that stretch reads YDHPSKPVEKRLMPPPPQKNKDSWLDHV. 2 stretches are compositionally biased toward basic and acidic residues: residues 652 to 661 and 668 to 677; these read HPSKPVEKRL and KNKDSWLDHV.

Belongs to the glycosyl hydrolase 35 family. In terms of assembly, homodimer. May form higher multimers. Detected in placenta (at protein level). Detected in fibroblasts and testis.

The protein resides in the lysosome. It localises to the cytoplasm. It is found in the perinuclear region. It carries out the reaction Hydrolysis of terminal non-reducing beta-D-galactose residues in beta-D-galactosides.. In terms of biological role, cleaves beta-linked terminal galactosyl residues from gangliosides, glycoproteins, and glycosaminoglycans. Its function is as follows. Has no beta-galactosidase catalytic activity, but plays functional roles in the formation of extracellular elastic fibers (elastogenesis) and in the development of connective tissue. Seems to be identical to the elastin-binding protein (EBP), a major component of the non-integrin cell surface receptor expressed on fibroblasts, smooth muscle cells, chondroblasts, leukocytes, and certain cancer cell types. In elastin producing cells, associates with tropoelastin intracellularly and functions as a recycling molecular chaperone which facilitates the secretions of tropoelastin and its assembly into elastic fibers. In Homo sapiens (Human), this protein is Beta-galactosidase (GLB1).